Consider the following 489-residue polypeptide: Glutamyl-tRNA(Gln) amidotransferase subunit A (489 aa).

Active-site charge relay system residues include lysine 80 and serine 160. The active-site Acyl-ester intermediate is the serine 184.

It belongs to the amidase family. GatA subfamily. Heterotrimer of A, B and C subunits.

The catalysed reaction is L-glutamyl-tRNA(Gln) + L-glutamine + ATP + H2O = L-glutaminyl-tRNA(Gln) + L-glutamate + ADP + phosphate + H(+). Functionally, allows the formation of correctly charged Gln-tRNA(Gln) through the transamidation of misacylated Glu-tRNA(Gln) in organisms which lack glutaminyl-tRNA synthetase. The reaction takes place in the presence of glutamine and ATP through an activated gamma-phospho-Glu-tRNA(Gln). This Wolbachia sp. subsp. Brugia malayi (strain TRS) protein is Glutamyl-tRNA(Gln) amidotransferase subunit A.